Reading from the N-terminus, the 372-residue chain is tRNA-specific 2-thiouridylase MnmA (372 aa).

ATP-binding positions include 16–23 and methionine 42; that span reads GMSGGVDS. The tract at residues 102–104 is interaction with target base in tRNA; that stretch reads NPD. Cysteine 107 functions as the Nucleophile in the catalytic mechanism. A disulfide bridge links cysteine 107 with cysteine 205. ATP is bound at residue glycine 132. Residues 155 to 157 are interaction with tRNA; it reads KDQ. The active-site Cysteine persulfide intermediate is cysteine 205. The segment at 317-318 is interaction with tRNA; the sequence is RY.

Belongs to the MnmA/TRMU family.

Its subcellular location is the cytoplasm. It catalyses the reaction S-sulfanyl-L-cysteinyl-[protein] + uridine(34) in tRNA + AH2 + ATP = 2-thiouridine(34) in tRNA + L-cysteinyl-[protein] + A + AMP + diphosphate + H(+). Its function is as follows. Catalyzes the 2-thiolation of uridine at the wobble position (U34) of tRNA, leading to the formation of s(2)U34. This is tRNA-specific 2-thiouridylase MnmA from Shewanella baltica (strain OS185).